The primary structure comprises 120 residues: Large ribosomal subunit protein uL18 (120 aa).

It belongs to the universal ribosomal protein uL18 family. As to quaternary structure, part of the 50S ribosomal subunit; part of the 5S rRNA/L5/L18/L25 subcomplex. Contacts the 5S and 23S rRNAs.

Functionally, this is one of the proteins that bind and probably mediate the attachment of the 5S RNA into the large ribosomal subunit, where it forms part of the central protuberance. This chain is Large ribosomal subunit protein uL18, found in Finegoldia magna (strain ATCC 29328 / DSM 20472 / WAL 2508) (Peptostreptococcus magnus).